A 247-amino-acid polypeptide reads, in one-letter code: Small ribosomal subunit protein uS3 (247 aa).

Positions 39–111 (IYDFFDKKVR…NISIQVIELK (73 aa)) constitute a KH type-2 domain. The tract at residues 221–247 (EEMDLLNAPKDRRVRRGGERHASTKKN) is disordered. The segment covering 236–247 (RGGERHASTKKN) has biased composition (basic and acidic residues).

It belongs to the universal ribosomal protein uS3 family. In terms of assembly, part of the 30S ribosomal subunit. Forms a tight complex with proteins S10 and S14.

Functionally, binds the lower part of the 30S subunit head. Binds mRNA in the 70S ribosome, positioning it for translation. In Metamycoplasma arthritidis (strain 158L3-1) (Mycoplasma arthritidis), this protein is Small ribosomal subunit protein uS3.